The chain runs to 305 residues: Probable cell division protein WhiA (305 aa).

The H-T-H motif DNA-binding region spans 269–302 (TIKELGELLEPSLGKSGVNHRLRKLVEQANELRK).

The protein belongs to the WhiA family.

Its function is as follows. Involved in cell division and chromosome segregation. In Lactococcus lactis subsp. lactis (strain IL1403) (Streptococcus lactis), this protein is Probable cell division protein WhiA.